Here is a 297-residue protein sequence, read N- to C-terminus: 4-hydroxy-tetrahydrodipicolinate synthase (297 aa).

Thr55 provides a ligand contact to pyruvate. The active-site Proton donor/acceptor is Tyr144. Lys172 acts as the Schiff-base intermediate with substrate in catalysis. Position 213 (Ile213) interacts with pyruvate.

The protein belongs to the DapA family. As to quaternary structure, homotetramer; dimer of dimers.

Its subcellular location is the cytoplasm. The enzyme catalyses L-aspartate 4-semialdehyde + pyruvate = (2S,4S)-4-hydroxy-2,3,4,5-tetrahydrodipicolinate + H2O + H(+). It participates in amino-acid biosynthesis; L-lysine biosynthesis via DAP pathway; (S)-tetrahydrodipicolinate from L-aspartate: step 3/4. Functionally, catalyzes the condensation of (S)-aspartate-beta-semialdehyde [(S)-ASA] and pyruvate to 4-hydroxy-tetrahydrodipicolinate (HTPA). This chain is 4-hydroxy-tetrahydrodipicolinate synthase, found in Lactococcus lactis subsp. cremoris (strain MG1363).